The following is an 831-amino-acid chain: Translation initiation factor IF-2 (831 aa).

Residues 329–499 (TRAPVVTVMG…LLISEMQDLK (171 aa)) form the tr-type G domain. The G1 stretch occupies residues 338–345 (GHVDHGKT). 338-345 (GHVDHGKT) provides a ligand contact to GTP. Residues 363-367 (GITQH) are G2. Residues 385–388 (DTPG) are G3. Residues 385-389 (DTPGH) and 439-442 (NKID) each bind GTP. The G4 stretch occupies residues 439-442 (NKID). The tract at residues 475 to 477 (SAL) is G5.

This sequence belongs to the TRAFAC class translation factor GTPase superfamily. Classic translation factor GTPase family. IF-2 subfamily.

Its subcellular location is the cytoplasm. Functionally, one of the essential components for the initiation of protein synthesis. Protects formylmethionyl-tRNA from spontaneous hydrolysis and promotes its binding to the 30S ribosomal subunits. Also involved in the hydrolysis of GTP during the formation of the 70S ribosomal complex. The polypeptide is Translation initiation factor IF-2 (infB) (Rickettsia prowazekii (strain Madrid E)).